Here is a 23-residue protein sequence, read N- to C-terminus: GFGCYRSCWKAGHDEETCKKECS.

Cystine bridges form between Cys-4-Cys-22 and Cys-8-Cys-18.

This sequence belongs to the short scorpion toxin superfamily. Potassium channel inhibitor kappa-KTx family. Kappa-KTx 1 subfamily. Monomer. Post-translationally, is not amidated. In terms of tissue distribution, expressed by the venom gland.

It localises to the secreted. Shows very weak blocking activity on voltage-gated potassium channels Kv10.1/KCNH1/EAG1 (6.2% inhibition by 40 uM of the toxin). Has no effect on the other voltage-gated potassium channels tested. This chain is Potassium channel toxin kappa-KTx 1.3, found in Heterometrus spinifer (Asia giant forest scorpion).